The following is a 134-amino-acid chain: Profilin-2 (134 aa).

A disulfide bridge connects residues C13 and C118. The Involved in PIP2 interaction motif lies at 84–100 (AVIRGKKGSGGITIKKT). T114 bears the Phosphothreonine mark.

This sequence belongs to the profilin family. In terms of assembly, occurs in many kinds of cells as a complex with monomeric actin in a 1:1 ratio. Phosphorylated by MAP kinases.

It is found in the cytoplasm. It localises to the cytoskeleton. In terms of biological role, binds to actin and affects the structure of the cytoskeleton. At high concentrations, profilin prevents the polymerization of actin, whereas it enhances it at low concentrations. This chain is Profilin-2, found in Olea europaea (Common olive).